We begin with the raw amino-acid sequence, 513 residues long: Activin receptor type-2A (513 aa).

An N-terminal signal peptide occupies residues 1–19 (MGAAAKLAFAVFLISCSSG). The Extracellular portion of the chain corresponds to 20-135 (AILGRSETQE…TSNPVTPKPP (116 aa)). 5 disulfide bridges follow: cysteine 30/cysteine 60, cysteine 50/cysteine 78, cysteine 85/cysteine 104, cysteine 91/cysteine 103, and cysteine 105/cysteine 110. N-linked (GlcNAc...) asparagine glycosylation is found at asparagine 43 and asparagine 66. Residues 136–161 (YYNILLYSLVPLMLVAGIVICAFWVY) form a helical membrane-spanning segment. Residues 162-513 (RHHKMAYPPV…VDFPPKESSL (352 aa)) are Cytoplasmic-facing. The 294-residue stretch at 192 to 485 (LQLLEVKARG…GERITQMQRL (294 aa)) folds into the Protein kinase domain. ATP contacts are provided by residues 198–206 (KARGGFGCV) and lysine 219. The active-site Proton acceptor is the aspartate 322.

Belongs to the protein kinase superfamily. TKL Ser/Thr protein kinase family. TGFB receptor subfamily. As to quaternary structure, part of a complex consisting of MAGI2/ARIP1, ACVR2A, ACVR1B and SMAD3. Interacts with MAGI2/ARIP1. Interacts with type I receptor ACVR1. Interacts with TSC22D1/TSC-22. Interacts with activin A/INHBA. It depends on Mg(2+) as a cofactor. Mn(2+) serves as cofactor.

Its subcellular location is the cell membrane. It carries out the reaction L-threonyl-[receptor-protein] + ATP = O-phospho-L-threonyl-[receptor-protein] + ADP + H(+). It catalyses the reaction L-seryl-[receptor-protein] + ATP = O-phospho-L-seryl-[receptor-protein] + ADP + H(+). In terms of biological role, on ligand binding, forms a receptor complex consisting of two type II and two type I transmembrane serine/threonine kinases. Type II receptors phosphorylate and activate type I receptors which autophosphorylate, then bind and activate SMAD transcriptional regulators. Receptor for activin A, activin B and inhibin A. Mediates induction of adipogenesis by GDF6. This Ovis aries (Sheep) protein is Activin receptor type-2A (ACVR2A).